We begin with the raw amino-acid sequence, 1269 residues long: DNA-directed RNA polymerase subunit beta'' (1269 aa).

Cysteine 226, cysteine 301, cysteine 308, and cysteine 311 together coordinate Zn(2+).

Belongs to the RNA polymerase beta' chain family. RpoC2 subfamily. In plastids the minimal PEP RNA polymerase catalytic core is composed of four subunits: alpha, beta, beta', and beta''. When a (nuclear-encoded) sigma factor is associated with the core the holoenzyme is formed, which can initiate transcription. The cofactor is Zn(2+).

The protein resides in the plastid. The protein localises to the chloroplast. The enzyme catalyses RNA(n) + a ribonucleoside 5'-triphosphate = RNA(n+1) + diphosphate. DNA-dependent RNA polymerase catalyzes the transcription of DNA into RNA using the four ribonucleoside triphosphates as substrates. In Cyanidium caldarium (Red alga), this protein is DNA-directed RNA polymerase subunit beta''.